The following is a 212-amino-acid chain: N-(5'-phosphoribosyl)anthranilate isomerase (212 aa).

This sequence belongs to the TrpF family.

It carries out the reaction N-(5-phospho-beta-D-ribosyl)anthranilate = 1-(2-carboxyphenylamino)-1-deoxy-D-ribulose 5-phosphate. Its pathway is amino-acid biosynthesis; L-tryptophan biosynthesis; L-tryptophan from chorismate: step 3/5. The protein is N-(5'-phosphoribosyl)anthranilate isomerase of Cereibacter sphaeroides (strain ATCC 17029 / ATH 2.4.9) (Rhodobacter sphaeroides).